The sequence spans 655 residues: DNA topoisomerase 4 subunit B (655 aa).

ATP contacts are provided by residues tyrosine 9, asparagine 49, aspartate 76, 116–122 (GLHGVGA), and lysine 340. Basic and acidic residues predominate over residues 387-397 (AARKAREEARS). The tract at residues 387–419 (AARKAREEARSGKKRKKSEATLSGKLTPAGSRN) is disordered. The Toprim domain maps to 423–537 (NELYLVEGDS…HGKVFIALPP (115 aa)). The Mg(2+) site is built by glutamate 429, aspartate 502, and aspartate 504.

Belongs to the type II topoisomerase family. ParE type 2 subfamily. In terms of assembly, heterotetramer composed of ParC and ParE. Mg(2+) is required as a cofactor. It depends on Mn(2+) as a cofactor. The cofactor is Ca(2+).

It carries out the reaction ATP-dependent breakage, passage and rejoining of double-stranded DNA.. Topoisomerase IV is essential for chromosome segregation. It relaxes supercoiled DNA. Performs the decatenation events required during the replication of a circular DNA molecule. This is DNA topoisomerase 4 subunit B from Bacillus subtilis (strain 168).